Here is a 142-residue protein sequence, read N- to C-terminus: MALSAEDRALVRALWKKLGSNVGVYTTEALERTFLAFPATKTYFSHLDLSPGSSQVRAHGQKVADALSLAVERLDDLPHALSALSHLHACQLRVDPASFQLLGHCLLVTLARHYPGDFSPALQASLDKFLSHVISALVSEYR.

Residues alanine 2–arginine 142 form the Globin domain. Heme b is bound by residues histidine 59 and histidine 88.

Belongs to the globin family.

The protein is Hemoglobin subunit theta-1 (HBQ1) of Homo sapiens (Human).